We begin with the raw amino-acid sequence, 456 residues long: 3-isopropylmalate dehydratase large subunit (456 aa).

[4Fe-4S] cluster is bound by residues cysteine 336, cysteine 396, and cysteine 399.

Belongs to the aconitase/IPM isomerase family. LeuC type 1 subfamily. Heterodimer of LeuC and LeuD. [4Fe-4S] cluster serves as cofactor.

It catalyses the reaction (2R,3S)-3-isopropylmalate = (2S)-2-isopropylmalate. It participates in amino-acid biosynthesis; L-leucine biosynthesis; L-leucine from 3-methyl-2-oxobutanoate: step 2/4. Catalyzes the isomerization between 2-isopropylmalate and 3-isopropylmalate, via the formation of 2-isopropylmaleate. The chain is 3-isopropylmalate dehydratase large subunit from Staphylococcus aureus (strain MW2).